Here is a 604-residue protein sequence, read N- to C-terminus: Protein CBFA2T2 (604 aa).

Positions 25 to 105 (KRVPAMPGSP…SSTSSALTNQ (81 aa)) are disordered. Position 33 is a phosphoserine (serine 33). Residue lysine 38 forms a Glycyl lysine isopeptide (Lys-Gly) (interchain with G-Cter in SUMO2) linkage. A compositionally biased stretch (pro residues) spans 46–59 (PTMPPLPPINPGGP). Composition is skewed to polar residues over residues 64 to 79 (FTPTALSNGINHSPPT) and 88 to 105 (QRFSNGPASSTSSALTNQ). The tract at residues 107–215 (LPATCGARQL…QHEHLLLNTS (109 aa)) is interaction with PRDM14. A TAFH domain is found at 113 to 208 (ARQLSKLKRF…TPSQYLAQHE (96 aa)). Residues 229–265 (VHGNGKRPSPERREENSFDRDTIAPEPPAKRVCTISP) are disordered. A compositionally biased stretch (basic and acidic residues) spans 236–251 (PSPERREENSFDRDTI). Serine 264 carries the post-translational modification Phosphoserine. The nervy homology region 2 (NHR2) stretch occupies residues 331–377 (QDELVDHRLTEREWADEWKHLDHALNCIMEMVEKTRRSMAVLRRCQE). The disordered stretch occupies residues 397–427 (RKTGTELVSRQHSPGSADSLSNDSQREFNSR). Positions 402-419 (ELVSRQHSPGSADSLSND) are enriched in polar residues. Residue serine 409 is modified to Phosphoserine. The segment at 435–484 (VEFWKKTEEAVNKVKIQAMSEVQKAVAEAEQKAFEVIATERARMEQTIAD) is nervy homology region 3 (NHR3). Lysine 449 participates in a covalent cross-link: Glycyl lysine isopeptide (Lys-Gly) (interchain with G-Cter in SUMO2). Residues 451-491 (QAMSEVQKAVAEAEQKAFEVIATERARMEQTIADVKRQAAE) adopt a coiled-coil conformation. Positions 507, 510, 518, 521, 527, 531, 539, and 543 each coordinate Zn(2+). The MYND-type zinc-finger motif lies at 507–543 (CWNCGRKASETCSGCNIARYCGSFCQHKDWERHHRLC). The segment at 547–604 (LHGQSPHGQGRPLLPVGRGSSARSADCSVPSPALDKTSATTSRSSTPASVTAIDTNGL) is disordered. Position 577 is a phosphoserine (serine 577). Residues 583–598 (TSATTSRSSTPASVTA) show a composition bias toward low complexity.

It belongs to the CBFA2T family. Homooligomer. Homotetramerization is mediated by nervy homology region 2. Can interact with RUNX1T1/CBFA2T1 and CBFA2T3/MTG16; heterotetramerization between members of the CBFA2T family is proposed. Forms a heterooligomer with the AML1-MTG8/ETO fusion protein. Interacts with PRDM14. Interacts with RBPJ, GFI1, TCF4. Interacts with TAL1 and CBFA2T3/MTG16; the heteromer with CBFA2T3/MTG16 may function in repression of TAL1. As to expression, ubiquitously expressed in fetal and adult tissues. Highly expressed in adult brain, heart, lung, kidney, lymph node, appendix, thymus, testis, uterus, small intestine, prostate and thymus.

Its subcellular location is the nucleus. Transcriptional corepressor which facilitates transcriptional repression via its association with DNA-binding transcription factors and recruitment of other corepressors and histone-modifying enzymes. Via association with PRDM14 is involved in regulation of embryonic stem cell (ESC) pluripotency. Involved in primordial germ cell (PCG) formation. Stabilizes PRDM14 and OCT4 on chromatin in a homooligomerization-dependent manner. Can repress the expression of MMP7 in a ZBTB33-dependent manner. May function as a complex with the chimeric protein RUNX1/AML1-CBFA2T1/MTG8 (AML1-MTG8/ETO fusion protein) which is produced in acute myeloid leukemia with the chromosomal translocation t(8;21). May thus be involved in the repression of AML1-dependent transcription and the induction of G-CSF/CSF3-dependent cell growth. May be a tumor suppressor gene candidate involved in myeloid tumors with the deletion of the 20q11 region. Through heteromerization with CBFA2T3/MTG16 may be involved in regulation of the proliferation and the differentiation of erythroid progenitors by repressing the expression of TAL1 target genes. Required for the maintenance of the secretory cell lineage in the small intestine. Can inhibit Notch signaling probably by association with RBPJ and may be involved in GFI1-mediated Paneth cell differentiation. This is Protein CBFA2T2 (CBFA2T2) from Homo sapiens (Human).